The following is a 187-amino-acid chain: Lysozyme C-like protein DDB_G0288143 (187 aa).

A signal peptide spans 1–23; it reads MKVSNLISTITIASALCLSLTNA. Intrachain disulfides connect cysteine 50-cysteine 125, cysteine 74-cysteine 82, and cysteine 78-cysteine 97. Glutamate 55 is an active-site residue. The segment at 133–187 is disordered; that stretch reads QHGSHSSTSRDSSSSSSRDSTGTGYSSSGSGTSGSGSNSGQTGHFIPGQSGHGLN. Low complexity predominate over residues 136 to 175; it reads SHSSTSRDSSSSSSRDSTGTGYSSSGSGTSGSGSNSGQTG.

The protein belongs to the glycosyl hydrolase 22 family.

In Dictyostelium discoideum (Social amoeba), this protein is Lysozyme C-like protein DDB_G0288143.